Reading from the N-terminus, the 132-residue chain is Small ribosomal subunit protein uS8 (132 aa).

This sequence belongs to the universal ribosomal protein uS8 family. As to quaternary structure, part of the 30S ribosomal subunit. Contacts proteins S5 and S12.

One of the primary rRNA binding proteins, it binds directly to 16S rRNA central domain where it helps coordinate assembly of the platform of the 30S subunit. The protein is Small ribosomal subunit protein uS8 of Rhodopseudomonas palustris (strain BisA53).